The primary structure comprises 278 residues: Insulin-like growth factor-binding protein-like 1 (278 aa).

Residues 1–25 (MPRLSLLLPLLLLLLLPLLPPLSPS) form the signal peptide. One can recognise an IGFBP N-terminal domain in the interval 34–109 (RRPKCGPCRP…PEGTGLCVCA (76 aa)). 7 disulfide bridges follow: cysteine 38–cysteine 63, cysteine 41–cysteine 65, cysteine 46–cysteine 66, cysteine 52–cysteine 69, cysteine 77–cysteine 91, cysteine 85–cysteine 106, and cysteine 115–cysteine 151. The region spanning 95 to 153 (AAGAAPEGTGLCVCAQRGTVCGSDGRSYPSVCALRLRARHTPRAHPGHLHKARDGPCEF) is the Kazal-like domain. Positions 155–259 (PVVVVPPRSV…GEAESHSTVT (105 aa)) constitute an Ig-like C2-type domain. An N-linked (GlcNAc...) asparagine glycan is attached at asparagine 166. Residues cysteine 176 and cysteine 243 are joined by a disulfide bond.

As to expression, expressed at the highest level in both brain and testis, with lower levels in the prostate, bladder and lung.

It localises to the secreted. In terms of biological role, IGF-binding proteins prolong the half-life of IGFs and have been shown to either inhibit or stimulate the growth promoting effects of the IGFs in cell culture. They alter the interaction of IGFs with their cell surface receptors. May be a putative tumor suppressor protein. The chain is Insulin-like growth factor-binding protein-like 1 (IGFBPL1) from Homo sapiens (Human).